Consider the following 167-residue polypeptide: Ureidoglycolate lyase (167 aa).

The protein belongs to the ureidoglycolate lyase family. As to quaternary structure, homodimer. Ni(2+) is required as a cofactor.

The enzyme catalyses (S)-ureidoglycolate = urea + glyoxylate. The protein operates within nitrogen metabolism; (S)-allantoin degradation. In terms of biological role, catalyzes the catabolism of the allantoin degradation intermediate (S)-ureidoglycolate, generating urea and glyoxylate. Involved in the utilization of allantoin as nitrogen source. This is Ureidoglycolate lyase from Pseudomonas fluorescens (strain SBW25).